Here is a 284-residue protein sequence, read N- to C-terminus: Bifunctional protein FolD (284 aa).

NADP(+)-binding positions include 165-167 (GRS) and Ser-190.

It belongs to the tetrahydrofolate dehydrogenase/cyclohydrolase family. In terms of assembly, homodimer.

The catalysed reaction is (6R)-5,10-methylene-5,6,7,8-tetrahydrofolate + NADP(+) = (6R)-5,10-methenyltetrahydrofolate + NADPH. It carries out the reaction (6R)-5,10-methenyltetrahydrofolate + H2O = (6R)-10-formyltetrahydrofolate + H(+). It participates in one-carbon metabolism; tetrahydrofolate interconversion. Functionally, catalyzes the oxidation of 5,10-methylenetetrahydrofolate to 5,10-methenyltetrahydrofolate and then the hydrolysis of 5,10-methenyltetrahydrofolate to 10-formyltetrahydrofolate. The polypeptide is Bifunctional protein FolD (Streptococcus uberis (strain ATCC BAA-854 / 0140J)).